The following is a 251-amino-acid chain: NAD kinase (251 aa).

The Proton acceptor role is filled by D51. Residues 51 to 52, K56, 113 to 114, K124, H140, D142, 153 to 158, and A177 contribute to the NAD(+) site; these read DG, NE, and TGYSLS.

This sequence belongs to the NAD kinase family. Requires a divalent metal cation as cofactor.

Its subcellular location is the cytoplasm. The enzyme catalyses NAD(+) + ATP = ADP + NADP(+) + H(+). Its function is as follows. Involved in the regulation of the intracellular balance of NAD and NADP, and is a key enzyme in the biosynthesis of NADP. Catalyzes specifically the phosphorylation on 2'-hydroxyl of the adenosine moiety of NAD to yield NADP. This Thermosipho melanesiensis (strain DSM 12029 / CIP 104789 / BI429) protein is NAD kinase.